Reading from the N-terminus, the 470-residue chain is SHUGOSHIN 2 (470 aa).

A coiled-coil region spans residues 72-113; it reads IQKLRINLRSVQEKNLQLAQANSQMLAELNTNRDRLKDLQHE. Basic and acidic residues-rich tracts occupy residues 131 to 143 and 150 to 162; these read VLPR…KDKV and GDCK…DIKH. 2 disordered regions span residues 131 to 176 and 358 to 470; these read VLPR…IKSS and ESAG…RRKC. Over residues 163–172 the composition is skewed to basic residues; that stretch reads KDTKRKRTTR. Over residues 370-381 the composition is skewed to basic and acidic residues; sequence SESRHETKEITR. Basic residues predominate over residues 382–392; that stretch reads KRSFSTRRQST. 3 stretches are compositionally biased toward basic and acidic residues: residues 396–406, 423–438, and 449–462; these read SQTDEAIKEIA, TESK…EGMT, and HAAE…EVSL.

The protein belongs to the shugoshin family.

In terms of biological role, dispensable for both meiotic and mitotic cell cycle progression. Required with SGO1 for full protection of centromeric cohesion during anaphase I. Required to prevent precocious release of pericentromeric cohesins during meiosis. Acts redundantly to SGO1. The sequence is that of SHUGOSHIN 2 from Arabidopsis thaliana (Mouse-ear cress).